A 449-amino-acid chain; its full sequence is tRNA (guanine(37)-N(1))-methyltransferase (449 aa).

S-adenosyl-L-methionine contacts are provided by residues H216, 254 to 255, 282 to 283, and N345; these read DL and DG.

The protein belongs to the class I-like SAM-binding methyltransferase superfamily. TRM5/TYW2 family. As to quaternary structure, monomer.

It localises to the mitochondrion matrix. Its subcellular location is the nucleus. The protein resides in the cytoplasm. The enzyme catalyses guanosine(37) in tRNA + S-adenosyl-L-methionine = N(1)-methylguanosine(37) in tRNA + S-adenosyl-L-homocysteine + H(+). Functionally, specifically methylates the N1 position of guanosine-37 in various cytoplasmic and mitochondrial tRNAs. Methylation is not dependent on the nature of the nucleoside 5' of the target nucleoside. This is the first step in the biosynthesis of wybutosine (yW), a modified base adjacent to the anticodon of tRNAs and required for accurate decoding. This Candida albicans (strain WO-1) (Yeast) protein is tRNA (guanine(37)-N(1))-methyltransferase.